A 95-amino-acid polypeptide reads, in one-letter code: Neutrophil antibiotic peptide NP-4 (95 aa).

The signal sequence occupies residues 1–19 (MRTLALLAAILLVTLQAQA). Residues 20 to 62 (ELHSGMADDGVDQQQPRAQDLDVAVYIKQDETSPLEVLGAKAG) constitute a propeptide that is removed on maturation. 3 disulfide bridges follow: Cys-65–Cys-93, Cys-67–Cys-82, and Cys-72–Cys-92.

The protein belongs to the alpha-defensin family.

Its subcellular location is the secreted. Functionally, microbicidal activity. This Oryctolagus cuniculus (Rabbit) protein is Neutrophil antibiotic peptide NP-4.